Here is a 285-residue protein sequence, read N- to C-terminus: Putative pyruvate, phosphate dikinase regulatory protein (285 aa).

165–172 provides a ligand contact to ADP; it reads GVSRTSKT.

This sequence belongs to the pyruvate, phosphate/water dikinase regulatory protein family. PDRP subfamily.

The enzyme catalyses N(tele)-phospho-L-histidyl/L-threonyl-[pyruvate, phosphate dikinase] + ADP = N(tele)-phospho-L-histidyl/O-phospho-L-threonyl-[pyruvate, phosphate dikinase] + AMP + H(+). The catalysed reaction is N(tele)-phospho-L-histidyl/O-phospho-L-threonyl-[pyruvate, phosphate dikinase] + phosphate + H(+) = N(tele)-phospho-L-histidyl/L-threonyl-[pyruvate, phosphate dikinase] + diphosphate. In terms of biological role, bifunctional serine/threonine kinase and phosphorylase involved in the regulation of the pyruvate, phosphate dikinase (PPDK) by catalyzing its phosphorylation/dephosphorylation. This chain is Putative pyruvate, phosphate dikinase regulatory protein, found in Lactobacillus delbrueckii subsp. bulgaricus (strain ATCC 11842 / DSM 20081 / BCRC 10696 / JCM 1002 / NBRC 13953 / NCIMB 11778 / NCTC 12712 / WDCM 00102 / Lb 14).